The chain runs to 59 residues: Protein translocase subunit SecE (59 aa).

Residues 30–50 traverse the membrane as a helical segment; the sequence is ITVISTVIFFVIFFALLDTGI.

This sequence belongs to the SecE/SEC61-gamma family. In terms of assembly, component of the Sec protein translocase complex. Heterotrimer consisting of SecY, SecE and SecG subunits. The heterotrimers can form oligomers, although 1 heterotrimer is thought to be able to translocate proteins. Interacts with the ribosome. Interacts with SecDF, and other proteins may be involved. Interacts with SecA.

It localises to the cell membrane. Functionally, essential subunit of the Sec protein translocation channel SecYEG. Clamps together the 2 halves of SecY. May contact the channel plug during translocation. This Bacillus subtilis (strain 168) protein is Protein translocase subunit SecE.